The primary structure comprises 239 residues: NAD(P)H-hydrate epimerase (239 aa).

The YjeF N-terminal domain maps to 14–220; it reads AAALDQELMS…EMAEQYNLDI (207 aa). 64–68 contacts (6S)-NADPHX; the sequence is NNGGD. K(+)-binding residues include Asn65 and Asp126. (6S)-NADPHX-binding positions include 130–136 and Asp159; that span reads GFSFSGE. Ser162 lines the K(+) pocket.

This sequence belongs to the NnrE/AIBP family. It depends on K(+) as a cofactor.

It localises to the cytoplasm. It is found in the mitochondrion. It catalyses the reaction (6R)-NADHX = (6S)-NADHX. The catalysed reaction is (6R)-NADPHX = (6S)-NADPHX. In terms of biological role, catalyzes the epimerization of the S- and R-forms of NAD(P)HX, a damaged form of NAD(P)H that is a result of enzymatic or heat-dependent hydration. This is a prerequisite for the S-specific NAD(P)H-hydrate dehydratase to allow the repair of both epimers of NAD(P)HX. This is NAD(P)H-hydrate epimerase from Phaeosphaeria nodorum (strain SN15 / ATCC MYA-4574 / FGSC 10173) (Glume blotch fungus).